The primary structure comprises 130 residues: Albumin-1 D (130 aa).

A signal peptide spans 1–26 (MASVKLASLIVLFATLGMFLTKNVGA). Disulfide bonds link cysteine 29–cysteine 46, cysteine 33–cysteine 48, and cysteine 41–cysteine 58. 2 propeptides span residues 64–69 (VFLKAN) and 123–130 (LLKSVSTA).

Post-translationally, the C-terminal glycine may be removed from PA1b. In terms of tissue distribution, major component of both the cotyledons and embryonic axes of mature seeds.

In terms of biological role, PA1b binds to basic 7S globulin (BG) and stimulates its phosphorylation activity. Involved in the signal transduction system to regulate the growth and differentiation as a hormone peptide. Toxic to various insects through binding to a high affinity binding site in the insect gut. The chain is Albumin-1 D from Pisum sativum (Garden pea).